A 76-amino-acid polypeptide reads, in one-letter code: UPF0248 protein MmarC5_1387 (76 aa).

Belongs to the UPF0248 family.

The protein is UPF0248 protein MmarC5_1387 of Methanococcus maripaludis (strain C5 / ATCC BAA-1333).